The sequence spans 177 residues: ATP-dependent protease subunit HslV (177 aa).

The active site involves threonine 7. Positions 162, 165, and 168 each coordinate Na(+).

The protein belongs to the peptidase T1B family. HslV subfamily. As to quaternary structure, a double ring-shaped homohexamer of HslV is capped on each side by a ring-shaped HslU homohexamer. The assembly of the HslU/HslV complex is dependent on binding of ATP.

Its subcellular location is the cytoplasm. The enzyme catalyses ATP-dependent cleavage of peptide bonds with broad specificity.. Its activity is regulated as follows. Allosterically activated by HslU binding. Protease subunit of a proteasome-like degradation complex believed to be a general protein degrading machinery. In Persephonella marina (strain DSM 14350 / EX-H1), this protein is ATP-dependent protease subunit HslV.